The chain runs to 486 residues: Vacuolar-processing enzyme beta-isozyme (486 aa).

The signal sequence occupies residues 1 to 21 (MAKSCYFRPALLLLLVLLVHA). His-169 is an active-site residue. Cys-211 acts as the Nucleophile in catalysis. Cys-244 and Cys-258 are oxidised to a cystine. Asn-309 carries N-linked (GlcNAc...) asparagine glycosylation. 2 disulfide bridges follow: Cys-420-Cys-450 and Cys-432-Cys-467.

This sequence belongs to the peptidase C13 family. Auto-catalytic activation. Seed specific. Also expressed in the flowers and buds.

Its subcellular location is the vacuole. It is found in the protein storage vacuole. The enzyme catalyses Hydrolysis of proteins and small molecule substrates at -Asn-|-Xaa- bonds.. Functionally, asparagine-specific endopeptidase involved in the processing of vacuolar seed protein precursors into the mature forms. Probably involved in post-translational proteolysis of seed storage proteins in the protein storage vacuole of developing seeds. The sequence is that of Vacuolar-processing enzyme beta-isozyme from Arabidopsis thaliana (Mouse-ear cress).